An 809-amino-acid chain; its full sequence is Probable disease resistance protein At5g66900 (809 aa).

Positions 1-150 constitute an RPW8 domain; it reads MNDWASLGIG…LSKRMDLLSV (150 aa). Residues 50–86 are a coiled coil; the sequence is PLTQKIDSMQKELDFGVKELKELRDTIERADVAVRKF. NB-ARC domains follow at residues 153-280 and 339-438; these read PVFR…DDVW and SPDE…DMWV. 194–201 contacts ATP; the sequence is APPGCGKT. Residues 494 to 515 adopt a coiled-coil conformation; it reads QSEFKENLERKRLNLEILENTF. LRR repeat units lie at residues 650 to 672, 674 to 696, 698 to 720, and 722 to 744; these read KLQE…ISEI, SLKT…IGNL, RLEV…TEGL, and NLRF…IGKL.

This sequence belongs to the disease resistance NB-LRR family.

Its function is as follows. Probable disease resistance protein. The protein is Probable disease resistance protein At5g66900 of Arabidopsis thaliana (Mouse-ear cress).